Here is a 465-residue protein sequence, read N- to C-terminus: Asparagine--tRNA ligase (465 aa).

Belongs to the class-II aminoacyl-tRNA synthetase family. As to quaternary structure, homodimer.

The protein resides in the cytoplasm. It carries out the reaction tRNA(Asn) + L-asparagine + ATP = L-asparaginyl-tRNA(Asn) + AMP + diphosphate + H(+). This Pseudoalteromonas translucida (strain TAC 125) protein is Asparagine--tRNA ligase.